Reading from the N-terminus, the 357-residue chain is Crh-like protein 1 (357 aa).

The first 17 residues, 1–17 (MMLPLLAVSAFASLGAA), serve as a signal peptide directing secretion. One can recognise a GH16 domain in the interval 20-220 (YTSCNPTNSL…WAGGETDYDE (201 aa)). Asparagine 52 and asparagine 92 each carry an N-linked (GlcNAc...) asparagine glycan. Catalysis depends on glutamate 109, which acts as the Nucleophile. Catalysis depends on glutamate 113, which acts as the Proton donor. Glutamate 113 lines the chitin pocket. The N-linked (GlcNAc...) asparagine glycan is linked to asparagine 131. 3 residues coordinate chitin: lysine 193, tryptophan 197, and threonine 208. Residues asparagine 242 and asparagine 257 are each glycosylated (N-linked (GlcNAc...) asparagine). Glycine 326 carries the GPI-anchor amidated glycine lipid modification. The propeptide at 327 to 357 (SASAVFTGAAVTNLPSFFFTVFFALAIALAF) is removed in mature form. A helical membrane pass occupies residues 337 to 357 (VTNLPSFFFTVFFALAIALAF).

Belongs to the glycosyl hydrolase 16 family. CRH1 subfamily. The GPI-like anchor contains a phosphoceramide lipid group. The anchor position has not been determined.

It localises to the cell membrane. Its subcellular location is the secreted. The protein resides in the cell wall. The catalysed reaction is Random endo-hydrolysis of N-acetyl-beta-D-glucosaminide (1-&gt;4)-beta-linkages in chitin and chitodextrins.. Functionally, dual chitinase/transglycosylase that plays a role in cell wall architecture. Chitinase and transglycosylase activities are coupled. Required for the polysaccharide cross-linking at the septa and the cell wall. More specifically, transfers chitin to 1,6-beta-glucan in the cell wall. This Aspergillus fumigatus (strain ATCC MYA-4609 / CBS 101355 / FGSC A1100 / Af293) (Neosartorya fumigata) protein is Crh-like protein 1.